Consider the following 536-residue polypeptide: T-complex protein 1 subunit delta (536 aa).

Residues 1–21 form a disordered region; it reads MAAVAAPMASKPRGSKAESFV.

Belongs to the TCP-1 chaperonin family. In terms of assembly, heterooligomeric complex of about 850 to 900 kDa that forms two stacked rings, 12 to 16 nm in diameter.

The protein localises to the cytoplasm. Its function is as follows. Molecular chaperone; assists the folding of proteins upon ATP hydrolysis. Known to play a role, in vitro, in the folding of actin and tubulin. The polypeptide is T-complex protein 1 subunit delta (Arabidopsis thaliana (Mouse-ear cress)).